A 477-amino-acid chain; its full sequence is Kinesin-like protein KIN-1 (477 aa).

The region spanning 3–330 (NVTVCVRFRP…VRFGTRTKLI (328 aa)) is the Kinesin motor domain. Residue 86–93 (GQTGAGKT) participates in ATP binding. Positions 402–451 (QDAASQEVSLLTQAVEELKETVEELTDENERLRGELELAQEAAAAAAAAR) form a coiled coil.

It belongs to the TRAFAC class myosin-kinesin ATPase superfamily. Kinesin family. KIN-1 subfamily. As to expression, widely expressed. Expressed in young roots and leaves, in mature roots, culm, sheath and leaves, and in panicles at various developmental stages. Strongest expression is detected in panicles. In the panicle, expression is detected in anthers, glumme, lemma and palea. In the spikelet, expression is detected in both microsporocyte and the anther walls.

The protein resides in the cytoplasm. Its function is as follows. Kinesin-like motor protein that exhibits microtubule-stimulated ATPase activity. Plays an essential role in male meiotic chromosomal dynamics, male gametogenesis and anther dehiscence. May play a minor and nonessential role in regulating meiotic spindle formation. The chain is Kinesin-like protein KIN-1 from Oryza sativa subsp. japonica (Rice).